Consider the following 336-residue polypeptide: MNNPKYPKVNYIGNKEKIAEWICEQLPVDVRTIADVFSGGCSFSFEAKKRGYQVIANDILNINYQLALALIVNNQEILTACDVDFIFSNPPKSGFMTKNYSDVFFFKEECRELDAIRANILKLNNTYKQALAFALMRRAMIRKMPYSRFTISWEKVKQLRDEEYSYSKYGRRRAYHNQSFEFHFRENLNSYNQAVFNNGNIHQAYNEDVFELLDHIQADAVYLDPPYTGTMNNYFGFYGLLDSYMSGEIRQPFDNHFMDKNQAVELFEKLIEKLKPFKYWLLSYNNVSRPNREELTAMLSRNGRKVTVLETPHVYKVTGKENKQKHTELLFLVENR.

The protein belongs to the N(4)/N(6)-methyltransferase family.

The catalysed reaction is a 2'-deoxyadenosine in DNA + S-adenosyl-L-methionine = an N(6)-methyl-2'-deoxyadenosine in DNA + S-adenosyl-L-homocysteine + H(+). In terms of biological role, an alpha subtype methylase that recognizes the double-stranded sequence 5'-GGTGA-3', probably methylates A-5 on the top strand, and protects the DNA from cleavage by the HphI endonuclease. This chain is Type II methyltransferase M2.HphI (hphIBM), found in Haemophilus parahaemolyticus.